A 1131-amino-acid polypeptide reads, in one-letter code: Major DNA-binding protein (1131 aa).

Positions 790–791 (FW) match the Required for filament formation motif. The required for nuclear localization stretch occupies residues 1112–1131 (LKCEETEHENEEPSLKKARL).

Belongs to the herpesviridae major DNA-binding protein family. In terms of assembly, homooligomers. Forms double-helical filaments necessary for the formation of replication compartments within the host nucleus. Interacts with the origin-binding protein. Interacts with the helicase primase complex; this interaction stimulates primer synthesis activity of the helicase-primase complex. Interacts with the DNA polymerase. Interacts with the alkaline exonuclease; this interaction increases its nuclease processivity.

The protein resides in the host nucleus. Its function is as follows. Single-stranded DNA-binding protein required for DNA replication. In terms of biological role, plays several crucial roles in viral infection. Participates in the opening of the viral DNA origin to initiate replication by interacting with the origin-binding protein. May disrupt loops, hairpins and other secondary structures present on ssDNA to reduce and eliminate pausing of viral DNA polymerase at specific sites during elongation. Promotes viral DNA recombination by performing strand-transfer, characterized by the ability to transfer a DNA strand from a linear duplex to a complementary single-stranded DNA circle. Can also catalyze the renaturation of complementary single strands. Additionally, reorganizes the host cell nucleus, leading to the formation of prereplicative sites and replication compartments. This process is driven by the protein which can form double-helical filaments in the absence of DNA. The sequence is that of Major DNA-binding protein from Human herpesvirus 7 (strain JI) (HHV-7).